Here is a 553-residue protein sequence, read N- to C-terminus: Heterochromatin protein 1-binding protein 3 (553 aa).

A2 is modified (N-acetylalanine). A Phosphoserine modification is found at S6. Disordered regions lie at residues 29-134 (KLGE…KTIP) and 140-159 (SASQ…SPRP). The residue at position 51 (T51) is a Phosphothreonine. The span at 60–71 (GEEEKPEPDISS) shows a compositional bias: acidic residues. K64 is covalently cross-linked (Glycyl lysine isopeptide (Lys-Gly) (interchain with G-Cter in SUMO2)). Position 85 is a phosphothreonine (T85). Residues 94–127 (EQPKGEPENEEKEENKSSEETKKDEKDQSKEKEK) show a composition bias toward basic and acidic residues. Residue K97 forms a Glycyl lysine isopeptide (Lys-Gly) (interchain with G-Cter in SUMO2) linkage. Residues 140-154 (SASQLARAQKQTPMA) show a composition bias toward polar residues. Residues S142, S155, and S156 each carry the phosphoserine modification. One can recognise an H15 1 domain in the interval 157–232 (PRPKMDAILT…GASGSFVVVQ (76 aa)). Position 190 is an N6-acetyllysine (K190). The interval 230–255 (VVQKSRKTPQKSRNRKNRSSAVDPEP) is disordered. Basic residues predominate over residues 233-247 (KSRKTPQKSRNRKNR). S248 and S249 each carry phosphoserine. Positions 255–259 (PQVKL) match the PxVxL motif motif. H15 domains lie at 255–330 (PQVK…QLKK) and 337–413 (LGGS…QLCF). Residue K258 forms a Glycyl lysine isopeptide (Lys-Gly) (interchain with G-Cter in SUMO2) linkage. The interval 422-553 (LFPKKEPDDS…TMKKSFRVKK (132 aa)) is disordered. Residues 430–450 (DSRDEDEDEDESSEEDSEDEE) show a composition bias toward acidic residues. 3 positions are modified to phosphoserine: S441, S442, and S446. The segment covering 489–510 (GKARPLPKKAPPKAKTPAKKTR) has biased composition (basic residues). Residues 517–527 (KKPSGGSSKKP) are compositionally biased toward low complexity. Positions 543–553 (STMKKSFRVKK) are enriched in basic residues.

As to quaternary structure, interacts (via PxVxL motif) with CBX5 (via Trp-174).

The protein resides in the nucleus. It is found in the chromosome. In terms of biological role, component of heterochromatin that maintains heterochromatin integrity during G1/S progression and regulates the duration of G1 phase to critically influence cell proliferative capacity. Mediates chromatin condensation during hypoxia, leading to increased tumor cell viability, radio-resistance, chemo-resistance and self-renewal. In Homo sapiens (Human), this protein is Heterochromatin protein 1-binding protein 3 (HP1BP3).